The following is a 195-amino-acid chain: Dephospho-CoA kinase (195 aa).

Residues 3-195 (IIGLTGSIAM…FSIIENLLKN (193 aa)) enclose the DPCK domain. Position 11 to 16 (11 to 16 (AMGKST)) interacts with ATP.

The protein belongs to the CoaE family.

The protein resides in the cytoplasm. The catalysed reaction is 3'-dephospho-CoA + ATP = ADP + CoA + H(+). The protein operates within cofactor biosynthesis; coenzyme A biosynthesis; CoA from (R)-pantothenate: step 5/5. In terms of biological role, catalyzes the phosphorylation of the 3'-hydroxyl group of dephosphocoenzyme A to form coenzyme A. This Bartonella quintana (strain Toulouse) (Rochalimaea quintana) protein is Dephospho-CoA kinase.